The primary structure comprises 475 residues: Ataxin-10 (475 aa).

Arg10 carries the post-translational modification Omega-N-methylarginine. Phosphoserine is present on residues Ser12 and Ser77. A Phosphothreonine modification is found at Thr82. Ser430 is modified (phosphoserine).

It belongs to the ataxin-10 family. As to quaternary structure, homooligomer. Interacts with GNB2. Interacts with IQCB1. Interacts with OGT. Post-translationally, polyubiquitinated. In terms of processing, phosphorylation at Ser-12 by AURKB promotes the association of ATXN10 with PLK1. Phosphorylation at Ser-77 and Thr-82 by PLK1 may play a role in the regulation of cytokinesis and may stimulate the proteasome-mediated degradation of ATXN10.

Its subcellular location is the cytoplasm. It is found in the perinuclear region. The protein resides in the cytoskeleton. The protein localises to the cilium basal body. It localises to the microtubule organizing center. Its subcellular location is the centrosome. It is found in the centriole. The protein resides in the midbody. Functionally, may play a role in the regulation of cytokinesis. May play a role in signaling by stimulating protein glycosylation. Induces neuritogenesis by activating the Ras-MAP kinase pathway and is necessary for the survival of cerebellar neurons. Does not appear to play a major role in ciliogenesis. This is Ataxin-10 (ATXN10) from Bos taurus (Bovine).